A 184-amino-acid polypeptide reads, in one-letter code: MKNIFSILKLTFLMVVLFAVIYPLAIYGIAQFAPNKGKGETISVNEKVVGYQKIGQKFDQSNYFWGRPSAVDYNAAGSGGSNKAASNPDYLALVQKRIDTFLIAHPYLKKLEIPADMVTASGSGLDPNISPEGALIQVKRVAEVRKLSEEKVKALVENKINKPTLAGTSTVNVLELNVALDELK.

A helical membrane pass occupies residues 10-30 (LTFLMVVLFAVIYPLAIYGIA).

It belongs to the KdpC family. In terms of assembly, the system is composed of three essential subunits: KdpA, KdpB and KdpC.

The protein resides in the cell inner membrane. In terms of biological role, part of the high-affinity ATP-driven potassium transport (or Kdp) system, which catalyzes the hydrolysis of ATP coupled with the electrogenic transport of potassium into the cytoplasm. This subunit acts as a catalytic chaperone that increases the ATP-binding affinity of the ATP-hydrolyzing subunit KdpB by the formation of a transient KdpB/KdpC/ATP ternary complex. The protein is Potassium-transporting ATPase KdpC subunit of Flavobacterium psychrophilum (strain ATCC 49511 / DSM 21280 / CIP 103535 / JIP02/86).